The following is an 89-amino-acid chain: MQIHNYTSKFILNLRKISIMKVPELIDEILLILNEEEMTERELAEKLRVERAMLRKVLEFLMEMDFVERANLKLKLSESGRRLVRLDVY.

This is an uncharacterized protein from Archaeoglobus fulgidus (strain ATCC 49558 / DSM 4304 / JCM 9628 / NBRC 100126 / VC-16).